A 502-amino-acid polypeptide reads, in one-letter code: L-arabinose isomerase (502 aa).

Mn(2+) is bound by residues glutamate 307, glutamate 334, histidine 351, and histidine 450.

It belongs to the arabinose isomerase family. Mn(2+) is required as a cofactor.

It catalyses the reaction beta-L-arabinopyranose = L-ribulose. Its pathway is carbohydrate degradation; L-arabinose degradation via L-ribulose; D-xylulose 5-phosphate from L-arabinose (bacterial route): step 1/3. Catalyzes the conversion of L-arabinose to L-ribulose. This Nocardioides sp. (strain ATCC BAA-499 / JS614) protein is L-arabinose isomerase.